A 437-amino-acid polypeptide reads, in one-letter code: Glutamate-1-semialdehyde 2,1-aminomutase (437 aa).

At Lys-273 the chain carries N6-(pyridoxal phosphate)lysine.

The protein belongs to the class-III pyridoxal-phosphate-dependent aminotransferase family. HemL subfamily. As to quaternary structure, homodimer. Pyridoxal 5'-phosphate serves as cofactor.

Its subcellular location is the cytoplasm. The catalysed reaction is (S)-4-amino-5-oxopentanoate = 5-aminolevulinate. It functions in the pathway porphyrin-containing compound metabolism; protoporphyrin-IX biosynthesis; 5-aminolevulinate from L-glutamyl-tRNA(Glu): step 2/2. The chain is Glutamate-1-semialdehyde 2,1-aminomutase from Chlamydia abortus (strain DSM 27085 / S26/3) (Chlamydophila abortus).